Here is a 492-residue protein sequence, read N- to C-terminus: Transmembrane protease serine 2 (492 aa).

The Cytoplasmic segment spans residues 1–84 (MALNSGSPPA…TVCTSKTKKA (84 aa)). The chain crosses the membrane as a helical; Signal-anchor for type II membrane protein span at residues 85 to 105 (LCITLTLGTFLVGAALAAGLL). Residues 106–492 (WKFMGSKCSN…WIYRQMRADG (387 aa)) lie on the Extracellular side of the membrane. 9 cysteine pairs are disulfide-bonded: cysteine 113–cysteine 126, cysteine 120–cysteine 139, cysteine 133–cysteine 148, cysteine 172–cysteine 231, cysteine 185–cysteine 241, cysteine 244–cysteine 365, cysteine 281–cysteine 297, cysteine 410–cysteine 426, and cysteine 437–cysteine 465. Residues 118 to 148 (IECDSSGTCINPSNWCDGVSHCPGGEDENRC) enclose the LDL-receptor class A domain. Asparagine 131, aspartate 134, valine 136, aspartate 144, and glutamate 145 together coordinate Ca(2+). Residues 149–242 (VRLYGPNFIL…SKAVVSLRCI (94 aa)) enclose the SRCR domain. Asparagine 213 and asparagine 249 each carry an N-linked (GlcNAc...) asparagine glycan. One can recognise a Peptidase S1 domain in the interval 256 to 492 (IVGGESALPG…WIYRQMRADG (237 aa)). Active-site charge relay system residues include histidine 296 and aspartate 345. Residues 340 to 470 (KTKNNDIALM…WGSGCAKAYR (131 aa)) form an HKU1-CoV S protein-binding region. The Charge relay system role is filled by serine 441.

This sequence belongs to the peptidase S1 family. As to quaternary structure, the catalytically active form interacts with ACE2. Proteolytically processed; by an autocatalytic mechanism. Autocleavage induces active conformation. In terms of tissue distribution, expressed in several tissues that comprise large populations of epithelial cells with the highest level of transcripts measured in the prostate gland. Expressed in type II pneumocytes in the lung (at protein level). Expressed strongly in small intestine. Also expressed in colon, stomach and salivary gland. Coexpressed with ACE2 within lung type II pneumocytes, ileal absorptive enterocytes, intestinal epithelial cells, cornea, gallbladder and nasal goblet secretory cells.

The protein resides in the cell membrane. The protein localises to the secreted. It carries out the reaction The enzyme cleaves angiotensin-converting enzyme 2 (EC 3.4.17.23) and cleaves influenzea A and B virus and coronavirus spike glycoproteins at arginine residues.. Plasma membrane-anchored serine protease that cleaves at arginine residues. Participates in proteolytic cascades of relevance for the normal physiologic function of the prostate. Androgen-induced TMPRSS2 activates several substrates that include pro-hepatocyte growth factor/HGF, the protease activated receptor-2/F2RL1 or matriptase/ST14 leading to extracellular matrix disruption and metastasis of prostate cancer cells. In addition, activates trigeminal neurons and contribute to both spontaneous pain and mechanical allodynia. Functionally, (Microbial infection) Facilitates human coronaviruses SARS-CoV and SARS-CoV-2 infections via two independent mechanisms, proteolytic cleavage of ACE2 receptor which promotes viral uptake, and cleavage of coronavirus spike glycoproteins which activates the glycoprotein for host cell entry. The cleavage of SARS-COV2 spike glycoprotein occurs between the S2 and S2' site. Upon SARS-CoV-2 infection, increases syncytia formation by accelerating the fusion process. Proteolytically cleaves and activates the spike glycoproteins of human coronavirus 229E (HCoV-229E) and human coronavirus EMC (HCoV-EMC) and the fusion glycoproteins F0 of Sendai virus (SeV), human metapneumovirus (HMPV), human parainfluenza 1, 2, 3, 4a and 4b viruses (HPIV). Essential for spread and pathogenesis of influenza A virus (strains H1N1, H3N2 and H7N9); involved in proteolytic cleavage and activation of hemagglutinin (HA) protein which is essential for viral infectivity. In terms of biological role, (Microbial infection) Receptor for human coronavirus HKU1-CoV, acts synergistically with disialoside glycans to facilitate the entry of the virus. After binding to cell-surface disialoside glycans, the viral S protein interacts with the inactive form of TMPRSS2 and inhibits its protease activity. The sequence is that of Transmembrane protease serine 2 from Homo sapiens (Human).